The chain runs to 96 residues: Small ribosomal subunit protein bS21 (96 aa).

Residues 52 to 96 (RRARKQARKTAIREGLIAAPKPKARPVSPRRPAAPAPASSPVGAA) form a disordered region. The segment covering 69–96 (AAPKPKARPVSPRRPAAPAPASSPVGAA) has biased composition (low complexity).

Belongs to the bacterial ribosomal protein bS21 family.

The polypeptide is Small ribosomal subunit protein bS21 (Methylobacterium nodulans (strain LMG 21967 / CNCM I-2342 / ORS 2060)).